The sequence spans 245 residues: tRNA1(Val) (adenine(37)-N6)-methyltransferase (245 aa).

It belongs to the methyltransferase superfamily. tRNA (adenine-N(6)-)-methyltransferase family.

The protein localises to the cytoplasm. The catalysed reaction is adenosine(37) in tRNA1(Val) + S-adenosyl-L-methionine = N(6)-methyladenosine(37) in tRNA1(Val) + S-adenosyl-L-homocysteine + H(+). Specifically methylates the adenine in position 37 of tRNA(1)(Val) (anticodon cmo5UAC). The chain is tRNA1(Val) (adenine(37)-N6)-methyltransferase from Cronobacter sakazakii (strain ATCC BAA-894) (Enterobacter sakazakii).